We begin with the raw amino-acid sequence, 45 residues long: Large ribosomal subunit protein bL36 (45 aa).

Residues 26-45 (VINKKDPNRKQRQKGPARKK) form a disordered region. Residues 35–45 (KQRQKGPARKK) are compositionally biased toward basic residues.

This sequence belongs to the bacterial ribosomal protein bL36 family.

In Protochlamydia amoebophila (strain UWE25), this protein is Large ribosomal subunit protein bL36.